Here is an 836-residue protein sequence, read N- to C-terminus: Protein translocase subunit SecA (836 aa).

ATP-binding positions include glutamine 85, glycine 103 to threonine 107, and aspartate 492. The tract at residues arginine 786–asparagine 817 is disordered. Residues aspartate 801–arginine 816 show a composition bias toward basic and acidic residues. Zn(2+) is bound by residues cysteine 820, cysteine 822, cysteine 831, and cysteine 832.

The protein belongs to the SecA family. As to quaternary structure, monomer and homodimer. Part of the essential Sec protein translocation apparatus which comprises SecA, SecYEG and auxiliary proteins SecDF. Other proteins may also be involved. The cofactor is Zn(2+).

It is found in the cell membrane. It localises to the cytoplasm. The catalysed reaction is ATP + H2O + cellular proteinSide 1 = ADP + phosphate + cellular proteinSide 2.. Its function is as follows. Part of the Sec protein translocase complex. Interacts with the SecYEG preprotein conducting channel. Has a central role in coupling the hydrolysis of ATP to the transfer of proteins into and across the cell membrane, serving as an ATP-driven molecular motor driving the stepwise translocation of polypeptide chains across the membrane. The chain is Protein translocase subunit SecA from Clostridium tetani (strain Massachusetts / E88).